The primary structure comprises 535 residues: SIR4-interacting protein SIF2 (535 aa).

The LisH domain maps to 4–36 (TSEELNYLIWRYCQEMGHEVSALALQDETRVLE). Residues 104–140 (EGRFTLETNSESNKAGEDGASTVERETQEDDTNSIDS) are disordered. Acidic residues predominate over residues 130–140 (TQEDDTNSIDS). Serine 137 is subject to Phosphoserine. WD repeat units lie at residues 155 to 186 (VKLDNIVSSTWNPLDESILAYGEKNSVARLAR), 218 to 248 (KTTNQVTCLAWSHDGNSIVTGVENGELRLWN), 259 to 289 (FHRAPIVSVKWNKDGTHIISMDVENVTILWN), 316 to 345 (GDGSLGVDVEWVDDDKFVIPGPKGAIFVYQ), 357 to 387 (GHHGPISVLEFNDTNKLLLSASDDGTLRIWH), 399 to 428 (GHSQSIVSASWVGDDKVISCSMDGSVRLWS), 440 to 470 (VDGVPIFAGRISQDGQKYAVAFMDGQVNVYD), and 503 to 534 (SQDNDYIFDLSWNCAGNKISVAYSLQEGSVVA).

As to quaternary structure, homotetramer. Interacts with SIR4 N-terminal domain. Interacts with a complex composed of SIN3 and RPD3. Identified in the Set3C complex with HOS2, HST1, SNT1, CPR1, HOS4/YIL112W and SET3.

The protein resides in the nucleus. Its function is as follows. Antagonizes telomeric silencing in yeast. May recruit SIR4 to non-telomeric sites or repression. In Saccharomyces cerevisiae (strain ATCC 204508 / S288c) (Baker's yeast), this protein is SIR4-interacting protein SIF2 (SIF2).